Consider the following 287-residue polypeptide: Bifunctional protein FolD (287 aa).

NADP(+) is bound by residues 169–171 (GRS) and serine 194.

It belongs to the tetrahydrofolate dehydrogenase/cyclohydrolase family. Homodimer.

The enzyme catalyses (6R)-5,10-methylene-5,6,7,8-tetrahydrofolate + NADP(+) = (6R)-5,10-methenyltetrahydrofolate + NADPH. It carries out the reaction (6R)-5,10-methenyltetrahydrofolate + H2O = (6R)-10-formyltetrahydrofolate + H(+). It participates in one-carbon metabolism; tetrahydrofolate interconversion. In terms of biological role, catalyzes the oxidation of 5,10-methylenetetrahydrofolate to 5,10-methenyltetrahydrofolate and then the hydrolysis of 5,10-methenyltetrahydrofolate to 10-formyltetrahydrofolate. The polypeptide is Bifunctional protein FolD (Albidiferax ferrireducens (strain ATCC BAA-621 / DSM 15236 / T118) (Rhodoferax ferrireducens)).